The following is a 382-amino-acid chain: Sphingosine kinase 1 (382 aa).

The DAGKc domain maps to 12-159 (PRPCRVLVLL…MNLLSLHTAS (148 aa)). Residues 22–24 (NPQ) and 54–58 (TERKN) contribute to the ATP site. 79–82 (SGDG) provides a ligand contact to substrate. The Proton donor/acceptor role is filled by aspartate 81. ATP-binding positions include glutamate 86 and 111-113 (GSG). 2 short sequence motifs (nuclear export signal) span residues 147–155 (LSPMNLLSL) and 161–169 (LRLYSVLSL). Aspartate 178 is a substrate binding site. ATP contacts are provided by arginine 185 and arginine 191. At threonine 193 the chain carries Phosphothreonine. A Phosphoserine modification is found at serine 225. 340–342 (DGE) lines the ATP pocket.

Interacts with ACY1. Binds to calmodulin. Interacts with SPHKAP. Interacts with CIB1, the interaction occurs in a calcium-dependent manner. Interacts with TRAF2. Interacts with EEF1A1; the interaction enhances SPHK1 kinase activity. Requires Mg(2+) as cofactor. In terms of tissue distribution, widely expressed. Expressed in brain (at protein level). Detected in neurons.

Its subcellular location is the cytoplasm. It localises to the endosome membrane. It is found in the nucleus. The protein resides in the cell membrane. The protein localises to the synapse. The enzyme catalyses a sphingoid base + ATP = a sphingoid 1-phosphate + ADP + H(+). It carries out the reaction L-seryl-[protein] + acetyl-CoA = O-acetyl-L-seryl-[protein] + CoA. The catalysed reaction is sphinganine + ATP = sphinganine 1-phosphate + ADP + H(+). It catalyses the reaction sphing-4-enine + ATP = sphing-4-enine 1-phosphate + ADP + H(+). The enzyme catalyses 1-O-hexadecyl-2-amino-sn-glycerol + ATP = 1-O-hexadecyl-2-desoxy-2-amino-sn-glycero-3-phosphate + ADP + H(+). Its activity is regulated as follows. Acetyltransferase activity increases in presence of the kinase substrate, sphingosine. In Purkinje cells, kinase activity on sphingosine increases in presence of VEGFA. In neurons, kinase activity increases during the first 24h in presence of Amyloid-beta protein 42 to decrease after 96h. Catalyzes the phosphorylation of sphingosine to form sphingosine 1-phosphate (SPP), a lipid mediator with both intra- and extracellular functions. Also acts on D-erythro-sphingosine and to a lesser extent sphinganine, but not other lipids, such as D,L-threo-dihydrosphingosine, N,N-dimethylsphingosine, diacylglycerol, ceramide, or phosphatidylinositol. In contrast to proapoptotic SPHK2, has a negative effect on intracellular ceramide levels, enhances cell growth and inhibits apoptosis. Involved in the regulation of inflammatory response and neuroinflammation. Via the product sphingosine 1-phosphate, stimulates TRAF2 E3 ubiquitin ligase activity, and promotes activation of NF-kappa-B in response to TNF signaling. In response to TNF and in parallel to NF-kappa-B activation, negatively regulates RANTES induction through p38 MAPK signaling pathway. Involved in endocytic membrane trafficking induced by sphingosine, recruited to dilate endosomes, also plays a role on later stages of endosomal maturation and membrane fusion independently of its kinase activity. In Purkinje cells, seems to be also involved in the regulation of autophagosome-lysosome fusion upon VEGFA. Functionally, has serine acetyltransferase activity on PTGS2/COX2 in an acetyl-CoA dependent manner. The acetyltransferase activity increases in presence of the kinase substrate, sphingosine. During neuroinflammation, through PTGS2 acetylation, promotes neuronal secretion of specialized preresolving mediators (SPMs), especially 15-R-lipoxin A4, which results in an increase of phagocytic microglia. The protein is Sphingosine kinase 1 of Mus musculus (Mouse).